The chain runs to 399 residues: MDSSYWENLLLTINRFLGVYPSGRVGVLRWLHTLWSLFLLMYIWTGSIVKCLEFTVEIPTIEKLLYLMEFPGNMATIAILVYYAVLNRPLAHGAELQIERIITGLKGKAKRLVYKRHGQRTLHLMATTLVFHGLCVLVDVVNYDFEFWTTWSSNSVYNLPGLMMSLGVLQYAQPVHFLWLVMDQMRMCLKELKLLQRPPQGSTKLDACYESAFAVLVDAGGGSALMIEEMRYTCNLIEQVHSQFLLRFGLYLVLNLLNSLVSICVELYLIFNFFETPLWEESVLLVYRLLWLAMHGGRIWFILSVNEQILEQKCNLCQLLNELEVCSSRLQRTINRFLLQLQRSIDQPLEACGIVTLDTRSLGGFIGVLMAIVIFLIQIGLGNKSLMGVALNRSNWVYV.

Topologically, residues 1–33 are cytoplasmic; that stretch reads MDSSYWENLLLTINRFLGVYPSGRVGVLRWLHT. Residues 34 to 54 traverse the membrane as a helical segment; it reads LWSLFLLMYIWTGSIVKCLEF. At 55–65 the chain is on the extracellular side; it reads TVEIPTIEKLL. The helical transmembrane segment at 66–86 threads the bilayer; sequence YLMEFPGNMATIAILVYYAVL. At 87-120 the chain is on the cytoplasmic side; it reads NRPLAHGAELQIERIITGLKGKAKRLVYKRHGQR. Residues 121 to 141 traverse the membrane as a helical segment; sequence TLHLMATTLVFHGLCVLVDVV. Residues 142 to 206 lie on the Extracellular side of the membrane; sequence NYDFEFWTTW…RPPQGSTKLD (65 aa). The helical transmembrane segment at 207–227 threads the bilayer; that stretch reads ACYESAFAVLVDAGGGSALMI. Residues 228-250 lie on the Cytoplasmic side of the membrane; the sequence is EEMRYTCNLIEQVHSQFLLRFGL. Residues 251 to 271 traverse the membrane as a helical segment; that stretch reads YLVLNLLNSLVSICVELYLIF. The Extracellular segment spans residues 272 to 282; sequence NFFETPLWEES. A helical transmembrane segment spans residues 283–303; sequence VLLVYRLLWLAMHGGRIWFIL. Over 304–361 the chain is Cytoplasmic; the sequence is SVNEQILEQKCNLCQLLNELEVCSSRLQRTINRFLLQLQRSIDQPLEACGIVTLDTRS. Residues 362–382 form a helical membrane-spanning segment; the sequence is LGGFIGVLMAIVIFLIQIGLG. 2 N-linked (GlcNAc...) asparagine glycosylation sites follow: Asn-383 and Asn-392. Residues 383 to 399 lie on the Extracellular side of the membrane; sequence NKSLMGVALNRSNWVYV.

Belongs to the insect chemoreceptor superfamily. Gustatory receptor (GR) family. Gr10a subfamily. In terms of tissue distribution, expressed in the adult labellar chemosensory neurons. In larvae, is expressed in neurons of the terminal external chemosensory organ.

Its subcellular location is the cell membrane. Probable gustatory receptor which mediates acceptance or avoidance behavior, depending on its substrates. This Drosophila melanogaster (Fruit fly) protein is Putative gustatory receptor 59e (Gr59e).